Here is a 226-residue protein sequence, read N- to C-terminus: Urease accessory protein UreF (226 aa).

The protein belongs to the UreF family. UreD, UreF and UreG form a complex that acts as a GTP-hydrolysis-dependent molecular chaperone, activating the urease apoprotein by helping to assemble the nickel containing metallocenter of UreC. The UreE protein probably delivers the nickel.

The protein localises to the cytoplasm. Required for maturation of urease via the functional incorporation of the urease nickel metallocenter. In Corynebacterium glutamicum (strain R), this protein is Urease accessory protein UreF.